The following is a 98-amino-acid chain: Integration host factor subunit alpha (98 aa).

Positions 53–69 are enriched in basic and acidic residues; the sequence is DLREKSERPGRNPKTGE. The interval 53 to 73 is disordered; the sequence is DLREKSERPGRNPKTGEDIPI.

This sequence belongs to the bacterial histone-like protein family. Heterodimer of an alpha and a beta chain.

In terms of biological role, this protein is one of the two subunits of integration host factor, a specific DNA-binding protein that functions in genetic recombination as well as in transcriptional and translational control. This chain is Integration host factor subunit alpha, found in Aliivibrio fischeri (strain ATCC 700601 / ES114) (Vibrio fischeri).